Reading from the N-terminus, the 420-residue chain is Sulfate adenylyltransferase (420 aa).

Ala-2 carries the post-translational modification N-acetylalanine.

Belongs to the sulfate adenylyltransferase family. Requires Mg(2+) as cofactor.

The catalysed reaction is sulfate + ATP + H(+) = adenosine 5'-phosphosulfate + diphosphate. It participates in sulfur metabolism; hydrogen sulfide biosynthesis; sulfite from sulfate: step 1/3. With respect to regulation, inhibited by adenosine 5'-phosphosulfate (APS), but not by 3'phosphoadenosine 5'-phosphosulfate (PAPS). Inhibited by AMP, ADP, CTP, GTP, ITP, UTP and anions other than those in group IV. In Pyropia yezoensis (Susabi-nori), this protein is Sulfate adenylyltransferase.